The following is a 200-amino-acid chain: Serine/arginine-rich splicing factor RSZ23 (200 aa).

Residues 2–71 (ARVYVGNLDP…NGWRVELSTK (70 aa)) enclose the RRM domain. The CCHC-type zinc finger occupies 86 to 103 (MKCYECGEPGHFARECRL). Residues 105–200 (IGSGGLGSGR…REESPYANNA (96 aa)) form a disordered region. Positions 113 to 139 (GRRRSRSRSRSPRYRGRSRSRSPRYRR) are enriched in basic residues.

This sequence belongs to the splicing factor SR family. Extensively phosphorylated on serine residues in the RS domain. Expressed in roots, leaves and immature seeds.

The protein localises to the nucleus. In terms of biological role, involved in pre-mRNA splicing. In protoplast assay, enhances splicing efficiency of WAXY intron 1 and alters the selection of the 5'-splice sites by stimulating site 1 (proximal site). The polypeptide is Serine/arginine-rich splicing factor RSZ23 (RSZ23) (Oryza sativa subsp. japonica (Rice)).